We begin with the raw amino-acid sequence, 167 residues long: Crossover junction endodeoxyribonuclease RuvC (167 aa).

Residues Asp-11, Glu-71, and Asp-143 contribute to the active site. Positions 11, 71, and 143 each coordinate Mg(2+).

This sequence belongs to the RuvC family. In terms of assembly, homodimer which binds Holliday junction (HJ) DNA. The HJ becomes 2-fold symmetrical on binding to RuvC with unstacked arms; it has a different conformation from HJ DNA in complex with RuvA. In the full resolvosome a probable DNA-RuvA(4)-RuvB(12)-RuvC(2) complex forms which resolves the HJ. The cofactor is Mg(2+).

The protein localises to the cytoplasm. It catalyses the reaction Endonucleolytic cleavage at a junction such as a reciprocal single-stranded crossover between two homologous DNA duplexes (Holliday junction).. The RuvA-RuvB-RuvC complex processes Holliday junction (HJ) DNA during genetic recombination and DNA repair. Endonuclease that resolves HJ intermediates. Cleaves cruciform DNA by making single-stranded nicks across the HJ at symmetrical positions within the homologous arms, yielding a 5'-phosphate and a 3'-hydroxyl group; requires a central core of homology in the junction. The consensus cleavage sequence is 5'-(A/T)TT(C/G)-3'. Cleavage occurs on the 3'-side of the TT dinucleotide at the point of strand exchange. HJ branch migration catalyzed by RuvA-RuvB allows RuvC to scan DNA until it finds its consensus sequence, where it cleaves and resolves the cruciform DNA. The polypeptide is Crossover junction endodeoxyribonuclease RuvC (Hyphomonas neptunium (strain ATCC 15444)).